The primary structure comprises 380 residues: MSKKDFYDVLGVNRDASDDDIKKAYRKLAMKYHPDRNPDSKDAEEKFKEAKEAYEILSDAQKRAAYDQYGHAGVDPQAGFGGAGGQQGFGGFGDAFADIFGDIFGGGARAGGGGGRNAVYRGSDLRYNLEITLEEAARGCEKQIRIPTMEECSHCHGSGAKPGTEPKTCPTCGGAGQVRMQQGFFSIQQTCPTCHGSGKQITDPCNICHGAGRVKSQKTLNVKIPAGVDDGDRIRLSGEGEPGTNGGPAGDLYVVTHIKPHAVFERDGMDLHCEMPISFATAALGGEIEIPTLDGAAKLRIPAETQSGQVFRLRGKGIKALRASQHGDLMCHVQVETPVKLTDRQKELLREFDAISQGAPAKHNPKAQSFMDKLKDFFGG.

Positions 5 to 70 constitute a J domain; it reads DFYDVLGVNR…QKRAAYDQYG (66 aa). The CR-type zinc finger occupies 139–217; it reads GCEKQIRIPT…CHGAGRVKSQ (79 aa). Residues Cys152, Cys155, Cys169, Cys172, Cys191, Cys194, Cys205, and Cys208 each coordinate Zn(2+). CXXCXGXG motif repeat units follow at residues 152-159, 169-176, 191-198, and 205-212; these read CSHCHGSG, CPTCGGAG, CPTCHGSG, and CNICHGAG.

Belongs to the DnaJ family. In terms of assembly, homodimer. Zn(2+) is required as a cofactor.

The protein resides in the cytoplasm. In terms of biological role, participates actively in the response to hyperosmotic and heat shock by preventing the aggregation of stress-denatured proteins and by disaggregating proteins, also in an autonomous, DnaK-independent fashion. Unfolded proteins bind initially to DnaJ; upon interaction with the DnaJ-bound protein, DnaK hydrolyzes its bound ATP, resulting in the formation of a stable complex. GrpE releases ADP from DnaK; ATP binding to DnaK triggers the release of the substrate protein, thus completing the reaction cycle. Several rounds of ATP-dependent interactions between DnaJ, DnaK and GrpE are required for fully efficient folding. Also involved, together with DnaK and GrpE, in the DNA replication of plasmids through activation of initiation proteins. The polypeptide is Chaperone protein DnaJ (Laribacter hongkongensis (strain HLHK9)).